A 92-amino-acid chain; its full sequence is Acylphosphatase (92 aa).

One can recognise an Acylphosphatase-like domain in the interval 5–92; sequence CIAAYVYGVV…ADFQGFSIRY (88 aa). Residues Arg20 and Asn38 contribute to the active site.

It belongs to the acylphosphatase family.

It catalyses the reaction an acyl phosphate + H2O = a carboxylate + phosphate + H(+). The sequence is that of Acylphosphatase (acyP) from Serratia proteamaculans (strain 568).